A 132-amino-acid polypeptide reads, in one-letter code: Small ribosomal subunit protein uS8 (132 aa).

This sequence belongs to the universal ribosomal protein uS8 family. In terms of assembly, part of the 30S ribosomal subunit. Contacts proteins S5 and S12.

Functionally, one of the primary rRNA binding proteins, it binds directly to 16S rRNA central domain where it helps coordinate assembly of the platform of the 30S subunit. In Xanthomonas euvesicatoria pv. vesicatoria (strain 85-10) (Xanthomonas campestris pv. vesicatoria), this protein is Small ribosomal subunit protein uS8.